Reading from the N-terminus, the 377-residue chain is Chaperone protein DnaJ (377 aa).

Positions Asp-5–Gly-70 constitute a J domain. The CR-type zinc finger occupies Gly-134 to Thr-212. Positions 147, 150, 164, 167, 186, 189, 200, and 203 each coordinate Zn(2+). 4 CXXCXGXG motif repeats span residues Cys-147–Gly-154, Cys-164–Gly-171, Cys-186–Gly-193, and Cys-200–Gly-207.

The protein belongs to the DnaJ family. In terms of assembly, homodimer. Zn(2+) is required as a cofactor.

The protein resides in the cytoplasm. Participates actively in the response to hyperosmotic and heat shock by preventing the aggregation of stress-denatured proteins and by disaggregating proteins, also in an autonomous, DnaK-independent fashion. Unfolded proteins bind initially to DnaJ; upon interaction with the DnaJ-bound protein, DnaK hydrolyzes its bound ATP, resulting in the formation of a stable complex. GrpE releases ADP from DnaK; ATP binding to DnaK triggers the release of the substrate protein, thus completing the reaction cycle. Several rounds of ATP-dependent interactions between DnaJ, DnaK and GrpE are required for fully efficient folding. Also involved, together with DnaK and GrpE, in the DNA replication of plasmids through activation of initiation proteins. This Actinobacillus succinogenes (strain ATCC 55618 / DSM 22257 / CCUG 43843 / 130Z) protein is Chaperone protein DnaJ.